The primary structure comprises 565 residues: Tetratricopeptide repeat protein 39A (565 aa).

TPR repeat units follow at residues 271 to 304 (AIFL…QQVW), 461 to 494 (CLIQ…EKKL), and 502 to 535 (PNAL…YKVY).

The protein belongs to the TTC39 family.

The chain is Tetratricopeptide repeat protein 39A (ttc39a) from Danio rerio (Zebrafish).